Here is a 526-residue protein sequence, read N- to C-terminus: MDVVPLPLLLGSLAVSAAVWYLVYFLRGGSGGDAARKRRPLPPGPRGWPVLGNLPQLGDKPHHTMCALARQYGPLFRLRFGCAEVVVAASAPVAAQFLRGHDANFSNRPPNSGAEHVAYNYQDLVFAPYGARWRALRKLCALHLFSAKALDDLRAVREGEVALMVRNLARQQAASVALGQEANVCATNTLARATIGHRVFAVDGGEGAREFKEMVVELMQLAGVFNVGDFVPALRWLDPQGVVAKMKRLHRRYDNMMNGFINERKAGAQPDGVAAGEHGNDLLSVLLARMQEEQKLDGDGEKITETDIKALLLNLFTAGTDTTSSTVEWALAELIRHPDVLKEAQHELDTVVGRGRLVSESDLPRLPYLTAVIKETFRLHPSTPLSLPREAAEECEVDGYRIPKGATLLVNVWAIARDPTQWPDPLQYQPSRFLPGRMHADVDVKGADFGLIPFGAGRRICAGLSWGLRMVTLMTATLVHGFDWTLANGATPDKLNMEEAYGLTLQRAVPLMVQPVPRLLPSAYGV.

Residues 6–26 (LPLLLGSLAVSAAVWYLVYFL) traverse the membrane as a helical segment. Cysteine 461 provides a ligand contact to heme.

Belongs to the cytochrome P450 family. Requires heme as cofactor.

The protein localises to the membrane. It catalyses the reaction a 3'-unsubstituted flavone + reduced [NADPH--hemoprotein reductase] + O2 = a 3'-hydroxyflavone + oxidized [NADPH--hemoprotein reductase] + H2O + H(+). Its pathway is secondary metabolite biosynthesis; flavonoid biosynthesis. Its function is as follows. Catalyzes the 3'-hydroxylation of the flavonoid B-ring to the 3',4'-hydroxylated state. Catalyzes the 3'-hydroxylation of apigenin to generate luteolin. The chain is Flavonoid 3'-monooxygenase CYP75B3 from Oryza sativa subsp. japonica (Rice).